The chain runs to 511 residues: Synaptotagmin-6 (511 aa).

At 1–59 (MSGVWGAGGPRCQAALAVLASLCRARPPPLGLDVETCQSFELQPPEQSPSAADSGTSVS) the chain is on the vesicular side. Residues 12 to 38 (CQAALAVLASLCRARPPPLGLDVETCQ) form a cysteine motif region. Residues 60-80 (LLAVVVIVCGVALVAVFFFLF) traverse the membrane as a helical segment. Topologically, residues 81–511 (WKLCWMPWRN…KSFKEGTPRL (431 aa)) are cytoplasmic. The segment covering 93 to 103 (ASSPSSANPAS) has biased composition (low complexity). Disordered regions lie at residues 93–118 (ASSP…MADK) and 157–182 (TKLQ…LPRQ). Polar residues predominate over residues 160–172 (QRQTTEPASSTRH). Residue S217 is modified to Phosphoserine. C2 domains follow at residues 230–351 (SCGK…SIWK) and 362–495 (DLGE…AHWH). Ca(2+) is bound by residues D261, D267, D319, F320, D321, S324, D327, D393, D399, D453, and D455. Residues 483-511 (MLAYPRKPIAHWHCLAEVKKSFKEGTPRL) form a necessary for cell membrane association (isoform 2) region.

Belongs to the synaptotagmin family. In terms of assembly, isoform 1: Homodimer; disulfide-linked via the cysteine motif. Isoform 1: Can also form heterodimers with SYT3, SYT7, SYT9 and SYT10. Isoform 1: Interacts with STX1A, STX1B and STX2; the interaction is Ca(2+)-dependent. Isoform 2: Is not able to form homodimer and heterodimers. The cofactor is Ca(2+).

It is found in the cytoplasmic vesicle. The protein localises to the secretory vesicle. It localises to the synaptic vesicle membrane. Its subcellular location is the membrane. The protein resides in the cytoplasm. It is found in the cytosol. The protein localises to the cell membrane. Its function is as follows. May be involved in Ca(2+)-dependent exocytosis of secretory vesicles through Ca(2+) and phospholipid binding to the C2 domain or may serve as Ca(2+) sensors in the process of vesicular trafficking and exocytosis. May mediate Ca(2+)-regulation of exocytosis in acrosomal reaction in sperm. This Rattus norvegicus (Rat) protein is Synaptotagmin-6 (Syt6).